The sequence spans 653 residues: Dual specificity protein kinase shkB (653 aa).

The interval 112 to 133 (NPNNNNNNSNNTNSSDSNQNYS) is disordered. One can recognise a Protein kinase domain in the interval 174–432 (YNREAKLGSG…FAEISKQRIL (259 aa)). Residues 180 to 188 (LGSGAFGSV) and K201 each bind ATP. Catalysis depends on D298, which acts as the Proton acceptor. One can recognise an SH2 domain in the interval 534-625 (GFMAATSSKN…IKEPFEGGPF (92 aa)).

Belongs to the protein kinase superfamily. TKL Ser/Thr protein kinase family. SH2 domain-containing protein kinase subfamily.

The protein resides in the membrane. The enzyme catalyses L-seryl-[protein] + ATP = O-phospho-L-seryl-[protein] + ADP + H(+). It catalyses the reaction L-threonyl-[protein] + ATP = O-phospho-L-threonyl-[protein] + ADP + H(+). In terms of biological role, required for proper chemotaxis and phagocytosis; proper spatiotemporal control of F-actin levels in chemotaxing cells. Negative regulator of the PI3K (phosphatidylinositol 3 kinase) pathway. Predominantly phosphorylates serines and threonines and tyrosines at a lower level. The protein is Dual specificity protein kinase shkB (shkB) of Dictyostelium discoideum (Social amoeba).